Consider the following 207-residue polypeptide: Holliday junction resolvase RecU (207 aa).

The tract at residues 1-30 is disordered; it reads MPIRYPNGQPYSRSPKQGQAKKPLPADTYS. Mg(2+)-binding residues include Thr-87, Asp-89, Glu-102, and Gln-121.

This sequence belongs to the RecU family. Mg(2+) is required as a cofactor.

The protein resides in the cytoplasm. The enzyme catalyses Endonucleolytic cleavage at a junction such as a reciprocal single-stranded crossover between two homologous DNA duplexes (Holliday junction).. In terms of biological role, endonuclease that resolves Holliday junction intermediates in genetic recombination. Cleaves mobile four-strand junctions by introducing symmetrical nicks in paired strands. Promotes annealing of linear ssDNA with homologous dsDNA. Required for DNA repair, homologous recombination and chromosome segregation. The polypeptide is Holliday junction resolvase RecU (Shouchella clausii (strain KSM-K16) (Alkalihalobacillus clausii)).